The chain runs to 132 residues: Fatty acid-binding protein, brain (132 aa).

V2 carries the post-translational modification N-acetylvaline. 127-129 (RHY) contributes to the a fatty acid binding site.

It belongs to the calycin superfamily. Fatty-acid binding protein (FABP) family.

It is found in the cytoplasm. Functionally, FABPs are thought to play a role in the intracellular transport of long-chain fatty acids and their acyl-CoA esters. In Gallus gallus (Chicken), this protein is Fatty acid-binding protein, brain (FABP7).